The chain runs to 461 residues: Decaprenylphosphoryl-beta-D-ribose oxidase (461 aa).

Residues Thr-19 to Thr-194 form the FAD-binding PCMH-type domain. Residues Ala-53–Asn-63, Gly-117, Thr-122–Gly-125, Cys-129–His-132, Ile-184, and Tyr-415 contribute to the FAD site.

It belongs to the DprE1 family. Monomer. Although forming apparent dimer in crystals, DprE1 does not dimerize appreciably in solution. Interacts with DprE2 to form an epimerase complex.

The protein localises to the periplasm. The catalysed reaction is trans,octa-cis-decaprenylphospho-beta-D-ribofuranose + FAD + H(+) = trans,octa-cis-decaprenylphospho-beta-D-erythro-pentofuranosid-2-ulose + FADH2. The protein operates within cell wall biogenesis; cell wall polysaccharide biosynthesis. Is inhibited by 8-nitro-benzothiazinones (BTZs) such as BTZ043 and PBTZ169; BTZs are a new class of antimycobacterial agents that kill M.tuberculosis in vitro, ex vivo, and in mouse models of tuberculosis. Is also inhibited by dinitrobenzamide derivatives (DNBs), which thus block formation of both cell-wall lipoarabinomannan and arabinogalactan via inhibition of decaprenyl-phospho-arabinose (DPA) synthesis; DNBs show high activity against intracellular growth of M.tuberculosis inside macrophages, including extensively drug resistant (XDR) strains. BTZs and DNBs are suicide inhibitors that act via covalent modification of DprE1; the essential nitro group of these compounds is reduced by DprE1 to a nitroso group, which then specifically reacts with Cys-387 of DprE1 to form an irreversible semimercaptal adduct. Many other compounds with diverse scaffolds were found to act as either covalent (e.g. nitroquinoxalines, nitroimidazoles) or non-covalent (e.g. the benzothiazole derivative TCA1, the 2-carboxyquinoxaline Ty38C, 8-pyrrole-benzothiazinones, 1,4-azaindoles, pyrazolopyridones, 4-aminoquinolone piperidine amides) DprE1 inhibitors. In terms of biological role, component of the DprE1-DprE2 complex that catalyzes the 2-step epimerization of decaprenyl-phospho-ribose (DPR) to decaprenyl-phospho-arabinose (DPA), a key precursor that serves as the arabinose donor required for the synthesis of cell-wall arabinans. DprE1 catalyzes the first step of epimerization, namely FAD-dependent oxidation of the C2' hydroxyl of DPR to yield the keto intermediate decaprenyl-phospho-2'-keto-D-arabinose (DPX). The intermediate DPX is then transferred to DprE2 subunit of the epimerase complex, most probably through a 'substrate channel' at the interface of DprE1-DprE2 complex. Can also use farnesyl-phosphoryl-beta-D-ribofuranose (FPR) as substrate in vitro. Functionally, dprE1 is a highly vulnerable and fully validated tuberculosis drug target. In Mycobacterium tuberculosis (strain CDC 1551 / Oshkosh), this protein is Decaprenylphosphoryl-beta-D-ribose oxidase.